Here is a 208-residue protein sequence, read N- to C-terminus: Uracil phosphoribosyltransferase (208 aa).

Residues R78, R103, and 130 to 138 (DPMLATGGS) each bind 5-phospho-alpha-D-ribose 1-diphosphate. Residues I193 and 198-200 (GDA) each bind uracil. Residue D199 coordinates 5-phospho-alpha-D-ribose 1-diphosphate.

It belongs to the UPRTase family. It depends on Mg(2+) as a cofactor.

The enzyme catalyses UMP + diphosphate = 5-phospho-alpha-D-ribose 1-diphosphate + uracil. It functions in the pathway pyrimidine metabolism; UMP biosynthesis via salvage pathway; UMP from uracil: step 1/1. Its activity is regulated as follows. Allosterically activated by GTP. In terms of biological role, catalyzes the conversion of uracil and 5-phospho-alpha-D-ribose 1-diphosphate (PRPP) to UMP and diphosphate. This Actinobacillus succinogenes (strain ATCC 55618 / DSM 22257 / CCUG 43843 / 130Z) protein is Uracil phosphoribosyltransferase.